The sequence spans 147 residues: Ponticulin-like protein C4 (147 aa).

A signal peptide spans 1 to 20; it reads MKFTKSLLLLIVAVFASSNA. Asn118 carries GPI-like-anchor amidated asparagine lipidation. An N-linked (GlcNAc...) asparagine glycan is attached at Asn118. Positions 119–147 are cleaved as a propeptide — removed in mature form; the sequence is SSESDSSDSTRIGASFALAAAALLSMIAL.

Belongs to the ponticulin family. Post-translationally, the GPI-like-anchor contains a phosphoceramide group, rather than a phosphatidyl group.

The protein localises to the cell membrane. This is Ponticulin-like protein C4 (ponC4) from Dictyostelium discoideum (Social amoeba).